Consider the following 196-residue polypeptide: Holliday junction branch migration complex subunit RuvA (196 aa).

The segment at 1 to 63 (MINKIYGKIV…DDDVKLFGFL (63 aa)) is domain I. A domain II region spans residues 64–142 (NISEREVFEN…KGDESSSYML (79 aa)). A region of interest (flexible linker) is located at residue Lys-143. Residues 143–196 (KFKELEQSIVNMGFDRKLVVVAFREIMLSDKFLILKEAEQEQFLFTETLKRLSV) are domain III.

This sequence belongs to the RuvA family. As to quaternary structure, homotetramer. Forms an RuvA(8)-RuvB(12)-Holliday junction (HJ) complex. HJ DNA is sandwiched between 2 RuvA tetramers; dsDNA enters through RuvA and exits via RuvB. An RuvB hexamer assembles on each DNA strand where it exits the tetramer. Each RuvB hexamer is contacted by two RuvA subunits (via domain III) on 2 adjacent RuvB subunits; this complex drives branch migration. In the full resolvosome a probable DNA-RuvA(4)-RuvB(12)-RuvC(2) complex forms which resolves the HJ.

The protein localises to the cytoplasm. Functionally, the RuvA-RuvB-RuvC complex processes Holliday junction (HJ) DNA during genetic recombination and DNA repair, while the RuvA-RuvB complex plays an important role in the rescue of blocked DNA replication forks via replication fork reversal (RFR). RuvA specifically binds to HJ cruciform DNA, conferring on it an open structure. The RuvB hexamer acts as an ATP-dependent pump, pulling dsDNA into and through the RuvAB complex. HJ branch migration allows RuvC to scan DNA until it finds its consensus sequence, where it cleaves and resolves the cruciform DNA. This Borrelia recurrentis (strain A1) protein is Holliday junction branch migration complex subunit RuvA.